We begin with the raw amino-acid sequence, 358 residues long: 3-dehydroquinate synthase (358 aa).

NAD(+)-binding positions include 70 to 75 (DGEQFK), 104 to 108 (GVIGD), 128 to 129 (TT), K141, K150, and 168 to 171 (CLHT). 3 residues coordinate Zn(2+): E183, H246, and H263.

The protein belongs to the sugar phosphate cyclases superfamily. Dehydroquinate synthase family. The cofactor is Co(2+). Requires Zn(2+) as cofactor. NAD(+) serves as cofactor.

It localises to the cytoplasm. It catalyses the reaction 7-phospho-2-dehydro-3-deoxy-D-arabino-heptonate = 3-dehydroquinate + phosphate. Its pathway is metabolic intermediate biosynthesis; chorismate biosynthesis; chorismate from D-erythrose 4-phosphate and phosphoenolpyruvate: step 2/7. Catalyzes the conversion of 3-deoxy-D-arabino-heptulosonate 7-phosphate (DAHP) to dehydroquinate (DHQ). The chain is 3-dehydroquinate synthase from Shewanella baltica (strain OS195).